Reading from the N-terminus, the 274-residue chain is Rhamnulose-1-phosphate aldolase (274 aa).

The active site involves glutamate 117. Zn(2+) contacts are provided by histidine 141, histidine 143, and histidine 212.

This sequence belongs to the aldolase class II family. RhaD subfamily. Homotetramer. Zn(2+) serves as cofactor.

Its subcellular location is the cytoplasm. It catalyses the reaction L-rhamnulose 1-phosphate = (S)-lactaldehyde + dihydroxyacetone phosphate. Its pathway is carbohydrate degradation; L-rhamnose degradation; glycerone phosphate from L-rhamnose: step 3/3. In terms of biological role, catalyzes the reversible cleavage of L-rhamnulose-1-phosphate to dihydroxyacetone phosphate (DHAP) and L-lactaldehyde. This chain is Rhamnulose-1-phosphate aldolase, found in Escherichia coli O17:K52:H18 (strain UMN026 / ExPEC).